Consider the following 266-residue polypeptide: Large ribosomal subunit protein eL8 (266 aa).

The segment covering 1-11 has biased composition (basic residues); that stretch reads MPKGKKAKGKK. The segment at 1–21 is disordered; it reads MPKGKKAKGKKVAPAPSVAKK.

It belongs to the eukaryotic ribosomal protein eL8 family. In terms of assembly, component of the large ribosomal subunit.

It is found in the cytoplasm. In terms of biological role, component of the large ribosomal subunit. The ribosome is a large ribonucleoprotein complex responsible for the synthesis of proteins in the cell. In Ictalurus punctatus (Channel catfish), this protein is Large ribosomal subunit protein eL8 (rpl7a).